Reading from the N-terminus, the 574-residue chain is Desiccation/radiation resistance protein DR_1769 (574 aa).

An N-terminal signal peptide occupies residues 1-33 (MPDPAARRFSLPPFPLAALALSVALLGAPASLA). A compositionally biased stretch (low complexity) spans 400–438 (TAQTQARQAAAAASTSQQPRLPTLAQAPAPTPAPAQTTP). Residues 400 to 461 (TAQTQARQAA…APVPPVASPA (62 aa)) form a disordered region. A compositionally biased stretch (pro residues) spans 439–459 (RPQPTPAQPATPAAPVPPVAS).

Plays an important role in resistance to desiccation and radiation, maybe by protecting genome integrity under extreme conditions. This chain is Desiccation/radiation resistance protein DR_1769, found in Deinococcus radiodurans (strain ATCC 13939 / DSM 20539 / JCM 16871 / CCUG 27074 / LMG 4051 / NBRC 15346 / NCIMB 9279 / VKM B-1422 / R1).